The chain runs to 560 residues: DNA ligase B (560 aa).

Lysine 128 (N6-AMP-lysine intermediate) is an active-site residue.

This sequence belongs to the NAD-dependent DNA ligase family. LigB subfamily.

The enzyme catalyses NAD(+) + (deoxyribonucleotide)n-3'-hydroxyl + 5'-phospho-(deoxyribonucleotide)m = (deoxyribonucleotide)n+m + AMP + beta-nicotinamide D-nucleotide.. In terms of biological role, catalyzes the formation of phosphodiester linkages between 5'-phosphoryl and 3'-hydroxyl groups in double-stranded DNA using NAD as a coenzyme and as the energy source for the reaction. This is DNA ligase B from Azotobacter vinelandii (strain DJ / ATCC BAA-1303).